A 370-amino-acid chain; its full sequence is CCA-adding enzyme (370 aa).

Residues glycine 8 and arginine 11 each coordinate ATP. Residues glycine 8 and arginine 11 each coordinate CTP. Mg(2+) contacts are provided by aspartate 21 and aspartate 23. ATP-binding residues include arginine 91, arginine 137, and arginine 140. Arginine 91, arginine 137, and arginine 140 together coordinate CTP.

It belongs to the tRNA nucleotidyltransferase/poly(A) polymerase family. Bacterial CCA-adding enzyme type 2 subfamily. Mg(2+) serves as cofactor.

It catalyses the reaction a tRNA precursor + 2 CTP + ATP = a tRNA with a 3' CCA end + 3 diphosphate. It carries out the reaction a tRNA with a 3' CCA end + 2 CTP + ATP = a tRNA with a 3' CCACCA end + 3 diphosphate. Catalyzes the addition and repair of the essential 3'-terminal CCA sequence in tRNAs without using a nucleic acid template. Adds these three nucleotides in the order of C, C, and A to the tRNA nucleotide-73, using CTP and ATP as substrates and producing inorganic pyrophosphate. tRNA 3'-terminal CCA addition is required both for tRNA processing and repair. Also involved in tRNA surveillance by mediating tandem CCA addition to generate a CCACCA at the 3' terminus of unstable tRNAs. While stable tRNAs receive only 3'-terminal CCA, unstable tRNAs are marked with CCACCA and rapidly degraded. The chain is CCA-adding enzyme from Pseudomonas putida (strain W619).